We begin with the raw amino-acid sequence, 714 residues long: DNA ligase (714 aa).

NAD(+) is bound by residues 47–51 (DAEYD), 96–97 (SL), and Glu-128. The active-site N6-AMP-lysine intermediate is the Lys-130. Residues Arg-151, Glu-188, Lys-306, and Lys-330 each coordinate NAD(+). Residues Cys-435, Cys-438, Cys-453, and Cys-459 each coordinate Zn(2+). One can recognise a BRCT domain in the interval 637 to 714 (RRDTAVAGKT…TEDEWLALIS (78 aa)).

Belongs to the NAD-dependent DNA ligase family. LigA subfamily. The cofactor is Mg(2+). Mn(2+) is required as a cofactor.

It carries out the reaction NAD(+) + (deoxyribonucleotide)n-3'-hydroxyl + 5'-phospho-(deoxyribonucleotide)m = (deoxyribonucleotide)n+m + AMP + beta-nicotinamide D-nucleotide.. DNA ligase that catalyzes the formation of phosphodiester linkages between 5'-phosphoryl and 3'-hydroxyl groups in double-stranded DNA using NAD as a coenzyme and as the energy source for the reaction. It is essential for DNA replication and repair of damaged DNA. This chain is DNA ligase, found in Rhodopseudomonas palustris (strain HaA2).